We begin with the raw amino-acid sequence, 1608 residues long: Hemolysin (1608 aa).

An N-terminal signal peptide occupies residues 1–30; the sequence is MKNNNFRLSAAGKLAAALAIILAASAGAYA. Disordered stretches follow at residues 296–315, 452–488, 716–737, 971–1030, 1168–1199, and 1437–1469; these read SRVD…QNYR, KSSE…LRSE, EHTR…LSGG, AVNL…SASQ, AEST…TGGN, and PQQD…QGPL. Composition is skewed to polar residues over residues 303–313 and 460–474; these read SNKNGGDNYQN and RNHT…WSNS. Composition is skewed to basic and acidic residues over residues 478–488 and 716–726; these read ESLKASELRSE and EHTRDSEKTTR. Residues 727-736 show a composition bias toward polar residues; sequence TENSASSLSG. Over residues 977–996 the composition is skewed to basic and acidic residues; the sequence is DSHRSEAAANRQDEQSRDTR. The segment covering 1021 to 1030 has biased composition (polar residues); the sequence is TQRSNSSASQ.

The protein resides in the cell outer membrane. Its function is as follows. Bacterial hemolysins are exotoxins that attack blood cell membranes and cause cell rupture by mechanisms not clearly defined. In terms of biological role, cell-bound hemolysin, which releases heme-iron from erythrocytes by interaction with the erythrocyte membrane. ShlA requires ShlB function. The polypeptide is Hemolysin (shlA) (Serratia marcescens).